The following is a 206-amino-acid chain: Ribosomal RNA large subunit methyltransferase E (206 aa).

5 residues coordinate S-adenosyl-L-methionine: Gly60, Trp62, Asp80, Asp96, and Asp121. The Proton acceptor role is filled by Lys161.

The protein belongs to the class I-like SAM-binding methyltransferase superfamily. RNA methyltransferase RlmE family.

It is found in the cytoplasm. The enzyme catalyses uridine(2552) in 23S rRNA + S-adenosyl-L-methionine = 2'-O-methyluridine(2552) in 23S rRNA + S-adenosyl-L-homocysteine + H(+). Its function is as follows. Specifically methylates the uridine in position 2552 of 23S rRNA at the 2'-O position of the ribose in the fully assembled 50S ribosomal subunit. The polypeptide is Ribosomal RNA large subunit methyltransferase E (Francisella tularensis subsp. tularensis (strain FSC 198)).